Reading from the N-terminus, the 153-residue chain is Ribonuclease VapC6 (153 aa).

The region spanning 6–152 (VFIDSSVMVG…EKVDFIEIIK (147 aa)) is the PINc domain. The Mg(2+) site is built by Asp-9 and Asp-120.

It belongs to the PINc/VapC protein family. It depends on Mg(2+) as a cofactor.

In terms of biological role, toxic component of a type II toxin-antitoxin (TA) system. An RNase. The chain is Ribonuclease VapC6 from Methanocaldococcus jannaschii (strain ATCC 43067 / DSM 2661 / JAL-1 / JCM 10045 / NBRC 100440) (Methanococcus jannaschii).